The sequence spans 193 residues: Gas vesicle protein C (193 aa).

5 repeats span residues valine 19–phenylalanine 51, tyrosine 52–phenylalanine 84, histidine 85–phenylalanine 117, tyrosine 118–phenylalanine 150, and histidine 151–phenylalanine 183. The segment at valine 19–phenylalanine 183 is 5 X 33 AA tandem repeats.

It belongs to the gas vesicle GvpC family.

It is found in the gas vesicle. Functionally, confers stability, involved in shaping gas vesicles (GV), hollow, gas-filled proteinaceous nanostructures. During planktonic growth they allow positioning of the organism at a favorable depth for light or nutrient acquisition. The ratio of GvpA:GvpC is estimated to be 25:1. GvpC strengthens the GV wall, probably by connecting several GvpA proteins in the same and/or adjacent ribs. Removal of GvpC by SDS reduces the critical collapse pressure (CCP) of stored gas vesicles from 0.23 Mpa to 0.08 MPa. Removal of GvpC by urea reduces CCP of freshly isolated GVs from 0.550 MPa to 0.190 MPa; addition of recombinant GvpC restores CCP to 0.508 MPa. As the turgor pressure in this species is usually 0.35 MPa (plus the water column pressure in its growth environment), this protein is essential for GV formation. The polypeptide is Gas vesicle protein C (Dolichospermum flosaquae (Anabaena flos-aquae)).